The chain runs to 276 residues: Ammonia monooxygenase alpha subunit (276 aa).

The next 5 membrane-spanning stretches (helical) occupy residues 29 to 49, 66 to 86, 96 to 116, 123 to 143, and 150 to 170; these read VYFP…FMLL, PVVT…YLWV, LCVV…FYWW, FVTP…LYLT, and ALVG…PIFG. Residues Asp187, His191, and His204 each contribute to the Cu(+) site. The helical transmembrane segment at 219 to 239 threads the bilayer; sequence VIAAFFSAFVSMLMFTVWWYL.

The soluble ammonia monooxygenase is a nonamer composed of three alpha subunits (AmoA), three beta subunits (AmoB) and three gamma subunits (Cytochrome c1 PetC). Cu(+) is required as a cofactor.

The protein resides in the cell membrane. Its subcellular location is the cytoplasm. The enzyme catalyses AH2 + NH4(+) + O2 = hydroxylamine + A + H2O + H(+). In vitro, inhibited by acetylene. In fact, acetylene is oxidized to ketene which binds irreversibly to His-191 of ammonia monooxygenase alpha subunit (AmoA). In terms of biological role, part of the ammonia monooxygenase complex, which catalyzes the oxidation of ammonia to hydroxylamine, the first reaction in the process of ammonia oxidation to nitrite. This Nitrosomonas europaea (strain ATCC 19718 / CIP 103999 / KCTC 2705 / NBRC 14298) protein is Ammonia monooxygenase alpha subunit.